Reading from the N-terminus, the 172-residue chain is 3-hydroxydecanoyl-[acyl-carrier-protein] dehydratase (172 aa).

Residue His71 is part of the active site.

This sequence belongs to the thioester dehydratase family. FabA subfamily. Homodimer.

It is found in the cytoplasm. The enzyme catalyses a (3R)-hydroxyacyl-[ACP] = a (2E)-enoyl-[ACP] + H2O. It carries out the reaction (3R)-hydroxydecanoyl-[ACP] = (2E)-decenoyl-[ACP] + H2O. The catalysed reaction is (2E)-decenoyl-[ACP] = (3Z)-decenoyl-[ACP]. Its pathway is lipid metabolism; fatty acid biosynthesis. Functionally, necessary for the introduction of cis unsaturation into fatty acids. Catalyzes the dehydration of (3R)-3-hydroxydecanoyl-ACP to E-(2)-decenoyl-ACP and then its isomerization to Z-(3)-decenoyl-ACP. Can catalyze the dehydratase reaction for beta-hydroxyacyl-ACPs with saturated chain lengths up to 16:0, being most active on intermediate chain length. This chain is 3-hydroxydecanoyl-[acyl-carrier-protein] dehydratase, found in Escherichia coli (strain 55989 / EAEC).